We begin with the raw amino-acid sequence, 81 residues long: Protein Vpu (81 aa).

Topologically, residues 1–7 (MSYLLAI) are extracellular. A helical transmembrane segment spans residues 8–28 (GIAALIVALIIAIVVWTIVYI). The Cytoplasmic portion of the chain corresponds to 29-81 (EYKKLVRQRKINKLYKRIRERAEDSGNESEGDAEELAALGEMGPFIPGDINNL). S53 and S57 each carry phosphoserine; by host CK2.

It belongs to the HIV-1 VPU protein family. As to quaternary structure, homopentamer. Interacts with host CD4 and BRTC; these interactions induce proteasomal degradation of CD4. Interacts with host BST2; this interaction leads to the degradation of host BST2. Interacts with host FBXW11. Interacts with host AP1M1; this interaction plays a role in the mistrafficking and subsequent degradation of host BST2. Interacts with host RANBP2; this interaction allows Vpu to down-regulate host BLM sumoylation. In terms of processing, phosphorylated by host CK2. This phosphorylation is necessary for interaction with human BTRC and degradation of CD4.

It is found in the host membrane. Ion channel activity is inhibited by hexamethylene amiloride in vitro. Functionally, enhances virion budding by targeting host CD4 and Tetherin/BST2 to proteasome degradation. Degradation of CD4 prevents any unwanted premature interactions between viral Env and its host receptor CD4 in the endoplasmic reticulum. Degradation of antiretroviral protein Tetherin/BST2 is important for virion budding, as BST2 tethers new viral particles to the host cell membrane. Mechanistically, Vpu bridges either CD4 or BST2 to BTRC, a substrate recognition subunit of the Skp1/Cullin/F-box protein E3 ubiquitin ligase, induces their ubiquitination and subsequent proteasomal degradation. The alteration of the E3 ligase specificity by Vpu seems to promote the degradation of host IKBKB, leading to NF-kappa-B down-regulation and subsequent apoptosis. Acts as a viroporin that forms an oligomeric ion channel in membranes. Modulates the host DNA repair mechanisms to promote degradation of nuclear viral cDNA in cells that are already productively infected in order to suppress immune sensing and proviral hyper-integration (superinfection). Manipulates PML-NBs and modulates SUMOylation of host BLM protein thereby enhancing its DNA-end processing activity toward viral unintegrated linear DNA. Also inhibits RAD52-mediated homologous repair of viral cDNA, preventing the generation of dead-end circular forms of single copies of the long terminal repeat and permitting sustained nucleolytic attack. The polypeptide is Protein Vpu (Homo sapiens (Human)).